The chain runs to 155 residues: 3-hydroxyacyl-[acyl-carrier-protein] dehydratase FabZ (155 aa).

Histidine 58 is a catalytic residue.

The protein belongs to the thioester dehydratase family. FabZ subfamily.

It is found in the cytoplasm. It catalyses the reaction a (3R)-hydroxyacyl-[ACP] = a (2E)-enoyl-[ACP] + H2O. Functionally, involved in unsaturated fatty acids biosynthesis. Catalyzes the dehydration of short chain beta-hydroxyacyl-ACPs and long chain saturated and unsaturated beta-hydroxyacyl-ACPs. In Rhizobium etli (strain ATCC 51251 / DSM 11541 / JCM 21823 / NBRC 15573 / CFN 42), this protein is 3-hydroxyacyl-[acyl-carrier-protein] dehydratase FabZ.